Here is a 273-residue protein sequence, read N- to C-terminus: 3-methyl-2-oxobutanoate hydroxymethyltransferase (273 aa).

Residues Asp-49 and Asp-88 each contribute to the Mg(2+) site. 3-methyl-2-oxobutanoate contacts are provided by residues 49–50 (DS), Asp-88, and Lys-118. Glu-120 contacts Mg(2+). Glu-187 functions as the Proton acceptor in the catalytic mechanism.

This sequence belongs to the PanB family. As to quaternary structure, homodecamer; pentamer of dimers. The cofactor is Mg(2+).

Its subcellular location is the cytoplasm. It carries out the reaction 3-methyl-2-oxobutanoate + (6R)-5,10-methylene-5,6,7,8-tetrahydrofolate + H2O = 2-dehydropantoate + (6S)-5,6,7,8-tetrahydrofolate. The protein operates within cofactor biosynthesis; (R)-pantothenate biosynthesis; (R)-pantoate from 3-methyl-2-oxobutanoate: step 1/2. Functionally, catalyzes the reversible reaction in which hydroxymethyl group from 5,10-methylenetetrahydrofolate is transferred onto alpha-ketoisovalerate to form ketopantoate. This chain is 3-methyl-2-oxobutanoate hydroxymethyltransferase, found in Sinorhizobium fredii (strain NBRC 101917 / NGR234).